Reading from the N-terminus, the 530-residue chain is Pre-mRNA-splicing factor PRP9 (530 aa).

Residues 280-310 form a Matrin-type 1 zinc finger; that stretch reads IYCPFCSRWFKTSSVFESHLVGKIHKKNESK. The segment at 367–388 is disordered; sequence DSTEKEGAEQVDGEQRDGQLQE. Basic and acidic residues predominate over residues 368-388; that stretch reads STEKEGAEQVDGEQRDGQLQE. The Matrin-type 2 zinc-finger motif lies at 421–452; sequence YRCEICSNKVYNGRRTFERHFNEERHIYHLRC. A disordered region spans residues 488–516; sequence AVPPKPNPSQLKVPTELELEEEDEEGNVM. Acidic residues predominate over residues 504 to 513; it reads LELEEEDEEG.

It belongs to the SF3A3 family. Belongs to the CWC complex (or CEF1-associated complex), a spliceosome sub-complex reminiscent of a late-stage spliceosome composed of the U2, U5 and U6 snRNAs and at least BUD13, BUD31, BRR2, CDC40, CEF1, CLF1, CUS1, CWC2, CWC15, CWC21, CWC22, CWC23, CWC24, CWC25, CWC27, ECM2, HSH155, IST3, ISY1, LEA1, MSL1, NTC20, PRP8, PRP9, PRP11, PRP19, PRP21, PRP22, PRP45, PRP46, SLU7, SMB1, SMD1, SMD2, SMD3, SMX2, SMX3, SNT309, SNU114, SPP2, SYF1, SYF2, RSE1 and YJU2.

The protein resides in the nucleus. Its function is as follows. mRNA splicing factors, PRP9, PRP11, and PRP21, are necessary for binding of the U2 snRNP to the pre-mRNA in an early step of spliceosome assembly. In Saccharomyces cerevisiae (strain ATCC 204508 / S288c) (Baker's yeast), this protein is Pre-mRNA-splicing factor PRP9 (PRP9).